Consider the following 219-residue polypeptide: Flagellin A (219 aa).

Residues 1–12 constitute a propeptide that is removed on maturation; that stretch reads MKVKEFMNNKKG. N-linked (GlcNAc...) asparagine glycans are attached at residues Asn-38 and Asn-175.

Belongs to the archaeal flagellin family. Post-translationally, N-linked glycans consist of the 779 Da trisaccharide beta-ManNAc(Thr)-(1-4)-beta-GlcNAc3NAcA-(1-3)-beta-GlcNAc.

The protein resides in the archaeal flagellum. In terms of biological role, flagellin is the subunit protein which polymerizes to form the filaments of archaeal flagella. This is Flagellin A (flaA) from Methanococcus voltae.